The chain runs to 384 residues: MSSVPAPREYFLDSIRAWLMLLGIPFHISLIYSTHSWHVNSAAPSWWLTLFNDFIHAFRMQVFFVISGYFSYMLFLRYPLKHWWKVRVERVGIPMLTAIPLLTLPQFILLQYVKEKTENWPTLSAYEKYNTLAWELISHLWFLLVLVILTTVSIGIFTWFQKRQETSKPRPAAISLAKLSLIFFLLGVAYAAIRRIIFIVYPAILSDGMFNFIVMQTLFYVPFFILGALAFIHPDLKARFTTPSRGCTLGAAVAFIAYLLNQRYGSGDAWMYETESVITMVMGLWMVNVVFSLGHRLLNFQSARVTYFVNASLFIYLVHHPLTLFFGAYITPHISSNLIGFLCGLIFVMGIALILYEIHLRIPLLKFLFSGKPPVKQESRAAIG.

The next 10 membrane-spanning stretches (helical) occupy residues 17–37 (AWLM…THSW), 54–74 (FIHA…SYML), 91–111 (VGIP…ILLQ), 140–160 (LWFL…FTWF), 173–193 (AISL…YAAI), 212–232 (FIVM…LAFI), 240–260 (FTTP…AYLL), 274–294 (TESV…FSLG), 311–331 (ASLF…AYIT), and 338–358 (LIGF…LYEI).

This sequence belongs to the acyltransferase 3 family. OpgC subfamily.

The protein localises to the cell membrane. The protein operates within glycan metabolism; osmoregulated periplasmic glucan (OPG) biosynthesis. Necessary for the succinyl substitution of periplasmic glucans. Could catalyze the transfer of succinyl residues from the cytoplasmic side of the membrane to the nascent glucan backbones on the periplasmic side of the membrane. In Salmonella typhi, this protein is Glucans biosynthesis protein C.